The following is a 133-amino-acid chain: U-spanin (133 aa).

Residues 1–21 (MKLKKTCIAITVAVGVISLSG) form the signal peptide. Residue Cys-22 is the site of N-palmitoyl cysteine; by host attachment. Cys-22 carries S-diacylglycerol cysteine; by host lipidation. Residues 22–104 (CSTASALSGL…SITVTKSGSW (83 aa)) lie on the Periplasmic side of the membrane. The chain crosses the membrane as a helical span at residues 105 to 125 (YDPVVCWILVFIVLLLFYFLI). Over 126-133 (RKHEKKEA) the chain is Cytoplasmic.

It localises to the host cell inner membrane. Its subcellular location is the host cell outer membrane. Disrupts the host outer membrane and participates in cell lysis during virus exit. The spanin complex conducts the final step in host lysis by disrupting the outer membrane after holin and endolysin action have permeabilized the inner membrane and degraded the host peptidoglycans. Host outer membrane disruption is possibly due to local fusion between the inner and outer membrane performed by the spanin. In terms of biological role, seems to have a dominant negative lysis delay effect on gp11 function. May serve as an intrinsic anti-spanin, providing another level of regulation for u-spanin function. This chain is U-spanin, found in Escherichia phage T1 (Bacteriophage T1).